The sequence spans 226 residues: Cytidylate kinase (226 aa).

10–18 (GPASSGKST) contacts ATP.

Belongs to the cytidylate kinase family. Type 1 subfamily.

The protein resides in the cytoplasm. The enzyme catalyses CMP + ATP = CDP + ADP. It catalyses the reaction dCMP + ATP = dCDP + ADP. The protein is Cytidylate kinase of Enterococcus faecalis (strain ATCC 700802 / V583).